Reading from the N-terminus, the 910-residue chain is Schlafen family member 8 (910 aa).

Positions Met1–Pro354 are n'-domain region. Catalysis depends on residues Glu205 and Glu210. His280, Cys282, and Cys319 together coordinate Zn(2+). Gly599 to Thr606 contributes to the ATP binding site.

It belongs to the Schlafen family. Subgroup III subfamily. Mg(2+) serves as cofactor. In T-cells, expressed at relatively constant levels during development: expressed in immature CD3(-)CD4(-)CD8(-) T-cells (DN stage), in CD4(+)CD8(+) double-positive stage (DP) and mature CD4(+) or CD8(+) thymocytes. Expression is slightly reduced at the DP stage.

The protein resides in the cytoplasm. Functionally, endoribonuclease that cleaves tRNAs and rRNAs. Cleaves tRNAs 11 nucleotides from the 3'-terminus at the acceptor stem. May be involved in immune system via regulation of inflammation. This chain is Schlafen family member 8, found in Mus musculus (Mouse).